Here is a 221-residue protein sequence, read N- to C-terminus: Iron-sulfur cluster repair protein YtfE (221 aa).

Belongs to the RIC family. YtfE subfamily. As to quaternary structure, homodimer.

The protein resides in the cytoplasm. Functionally, di-iron-containing protein involved in the repair of iron-sulfur clusters damaged by oxidative and nitrosative stress conditions. The protein is Iron-sulfur cluster repair protein YtfE of Pectobacterium atrosepticum (strain SCRI 1043 / ATCC BAA-672) (Erwinia carotovora subsp. atroseptica).